The sequence spans 108 residues: UPF0102 protein Sbal_4100 (108 aa).

The protein belongs to the UPF0102 family.

This is UPF0102 protein Sbal_4100 from Shewanella baltica (strain OS155 / ATCC BAA-1091).